Consider the following 618-residue polypeptide: MPIQVLPPQLANQIAAGEVVERPASVVKELVENSLDAGATRVDIDIERGGAKLIRIRDNGCGIKKEELALALARHATSKIASLDDLEAIISLGFRGEALASISSVSRLTLTSRTAEQAEAWQAYAEGRDMDVTVKPAAHPVGTTLEVLDLFYNTPARRKFMRTEKTEFNHIDEIIRRIALARFDVTLNLSHNGKLVRQYRAVAKDGQKERRLGAICGTPFLEQALAIEWQHGDLTLRGWVADPNHTTTALTEIQYCYVNGRMMRDRLINHAIRQACEDKLGADQQPAFVLYLEIDPHQVDVNVHPAKHEVRFHQSRLVHDFIYQGVLSVLQQQTETTLPLEEIAPAPRHVPENRIAAGRNHFAVPAEPTAAREPATPRYSGGASGGNGGRQSAGGWPHAQPGYQKQQGEVYRALLQTPATSPAPEPVAPALDGHSQSFGRVLTIVGGDCALLEHAGTIQLLSLPVAERWLRQAQLTPGQSPVCAQPLLIPLRLKVSADEKAALQKAQSLLGELGIEFQSDAQHVTIRAVPLPLRQQNLQILIPELIGYLAQQTTFATVNIAQWIARNVQSEHPQWSMAQAISLLADVERLCPQLVKAPPGGLLQPVDLHSAMNALKHE.

The span at 367 to 381 (EPTAAREPATPRYSG) shows a compositional bias: low complexity. Residues 367–402 (EPTAAREPATPRYSGGASGGNGGRQSAGGWPHAQPG) form a disordered region. Over residues 382 to 392 (GASGGNGGRQS) the composition is skewed to gly residues.

It belongs to the DNA mismatch repair MutL/HexB family.

This protein is involved in the repair of mismatches in DNA. It is required for dam-dependent methyl-directed DNA mismatch repair. May act as a 'molecular matchmaker', a protein that promotes the formation of a stable complex between two or more DNA-binding proteins in an ATP-dependent manner without itself being part of a final effector complex. The sequence is that of DNA mismatch repair protein MutL from Salmonella dublin (strain CT_02021853).